Consider the following 336-residue polypeptide: Heme A synthase (336 aa).

8 helical membrane-spanning segments follow: residues 5–25 (LTRW…VGGI), 92–112 (GRAT…KGII), 117–137 (ILSY…GWYM), 153–173 (LAFH…KLVK), 191–211 (LIFS…GALV), 253–273 (FIHR…IISL), 284–304 (VAFY…ITLL), and 307–327 (VPII…SVVI). Position 255 (H255) interacts with heme. Position 315 (H315) interacts with heme.

The protein belongs to the COX15/CtaA family. Type 2 subfamily. In terms of assembly, interacts with CtaB. Heme b is required as a cofactor.

The protein localises to the cell membrane. The enzyme catalyses Fe(II)-heme o + 2 A + H2O = Fe(II)-heme a + 2 AH2. It participates in porphyrin-containing compound metabolism; heme A biosynthesis; heme A from heme O: step 1/1. Functionally, catalyzes the conversion of heme O to heme A by two successive hydroxylations of the methyl group at C8. The first hydroxylation forms heme I, the second hydroxylation results in an unstable dihydroxymethyl group, which spontaneously dehydrates, resulting in the formyl group of heme A. This is Heme A synthase from Rickettsia bellii (strain RML369-C).